Here is a 1138-residue protein sequence, read N- to C-terminus: Protein RECOGNITION OF PERONOSPORA PARASITICA 7 (1138 aa).

The 257-residue stretch at 166–422 (EENVKKLVGY…CNYVLSLSFE (257 aa)) folds into the NB-ARC domain. ATP is bound at residue 189–196 (GMGGLGKT). 19 LRR repeats span residues 544 to 565 (QYPTTLHVEKDINNPKLRSLVV), 566 to 581 (VTLGSWNMAGSSFTRL), 582 to 606 (ELLRVLDLVQAKLKGGKLASCIGKL), 607 to 631 (IHLRYLSLEYAEVTHIPYSLGNLKL), 655 to 680 (MQELRYLALPSLIERKTKLELSNLVK), 681 to 705 (LETLENFSTKNSSLEDLRGMVRLRT), 707 to 726 (TIELIEETSLETLAASIGGL), 727 to 752 (KYLEKLEIDDLGSKMRTKEAGIVFDF), 754 to 774 (HLKRLRLELYMPRLSKEQHFP), 775 to 797 (SHLTTLYLQHCRLEEDPMPILEK), 798 to 825 (LLQLKELELGHKSFSGKKMVCSSCGFPQ), 847 to 871 (MPLLLTLNIFDCRKLKQLPDEHLPS), 873 to 893 (LTAISLKKCGLEDPIPTLERL), 894 to 918 (VHLKELSLSELCGRIMVCTGGGFPQ), 940 to 963 (MPRLHTLEIRRCLKLKKLPNGFPQ), 1028 to 1050 (LEKLLHLKNVSLFQSFSGKRMVC), 1055 to 1078 (FPQLQKLSIREIEWEEWIVEQGSM), 1079 to 1103 (PLLHTLYIGVCPNLKELPDGLRFIY), and 1115 to 1138 (KKRLSEGGEDYYKVQHIPSVEFDD).

Belongs to the disease resistance NB-LRR family.

Functionally, disease resistance protein required for incompatible interactions with avirulent strains of Hyaloperonospora arabidopsidis (downy mildew), isolate Hpa-Hiks1 in cv. Columbia. The chain is Protein RECOGNITION OF PERONOSPORA PARASITICA 7 from Arabidopsis thaliana (Mouse-ear cress).